The following is a 155-amino-acid chain: Large ribosomal subunit protein eL24 (155 aa).

The tract at residues 92–155 (AKRNMKPEVR…KAAPRVGGKR (64 aa)) is disordered. Residues 96–117 (MKPEVRKAQREQAIKQAKEQKK) are compositionally biased toward basic and acidic residues. Positions 124–133 (KTTAPPTKGK) are enriched in low complexity.

Belongs to the eukaryotic ribosomal protein eL24 family.

The protein is Large ribosomal subunit protein eL24 (RpL24) of Plutella xylostella (Diamondback moth).